Here is a 250-residue protein sequence, read N- to C-terminus: DNA repair protein RecO (250 aa).

Belongs to the RecO family.

Involved in DNA repair and RecF pathway recombination. The sequence is that of DNA repair protein RecO from Rhodospirillum centenum (strain ATCC 51521 / SW).